The chain runs to 551 residues: MYCVQCEQTIRTPAGNGCSYAQGMCGKSAETSDLQDLLVAALQSLSAWALLARELDIRDRTIDSFAPRAFFATLTNVNFDSARIIGYAREALAMRDSLRTACLAKAPGTQCDHPLADLRLQGEDVATLRRQAAEFALDSDRAEIGDDIHGLRMLSLYGLKGAAAYMEHAHVLGQHSEAIYAQYHHYMAWLGTRPCDMDTLLDNAMGIGKMNFAIMAQLDKGETEAYGDPTPTSVNVRPLAGKCILISGHDLKDLQMLLEQTDGLGINVYTHGEMLPAHGYPELRKYRHLVGNYGSGWQNQQQEFARFPGPILMTSNCIIDPNVGNYSDRIWTRSIVGWPGVRHLEGDDFSQVIAQAQVCDGFPYSEIEHLITVGFGRATLLNAADSVIDLVAQKKLRHVFLLGGCDGSRDERSYYTDFARAIPQDCLIMTLACGKYRFNKLEFGTLEGLPRLLDVGQCNDAYGAIMLAVNLAEKLGCGINDLPLSLILSWFEQKAIVILLTLLALGVKNIYTGPTAPGFLTDNLLAILNQRFGMRAISTVDADLNGILGHA.

C3, C6, C18, and C25 together coordinate [2Fe-2S] cluster. Positions 249, 273, 317, 405, 433, 458, 492, and 494 each coordinate hybrid [4Fe-2O-2S] cluster. C405 bears the Cysteine persulfide mark.

Belongs to the HCP family. The cofactor is [2Fe-2S] cluster. Requires hybrid [4Fe-2O-2S] cluster as cofactor.

The protein localises to the cytoplasm. It carries out the reaction A + NH4(+) + H2O = hydroxylamine + AH2 + H(+). Catalyzes the reduction of hydroxylamine to form NH(3) and H(2)O. The protein is Hydroxylamine reductase of Edwardsiella ictaluri (strain 93-146).